A 198-amino-acid polypeptide reads, in one-letter code: Recombination protein RecR (198 aa).

The C4-type zinc finger occupies 56-71 (CKVCGNFSEEDECVIC). One can recognise a Toprim domain in the interval 79–174 (GVICVVEEPK…RVSKLASGLP (96 aa)).

Belongs to the RecR family.

Its function is as follows. May play a role in DNA repair. It seems to be involved in an RecBC-independent recombinational process of DNA repair. It may act with RecF and RecO. The chain is Recombination protein RecR from Tropheryma whipplei (strain Twist) (Whipple's bacillus).